The chain runs to 307 residues: Elongation factor Ts (307 aa).

The segment at 79 to 82 is involved in Mg(2+) ion dislocation from EF-Tu; the sequence is TDFV.

Belongs to the EF-Ts family.

Its subcellular location is the cytoplasm. In terms of biological role, associates with the EF-Tu.GDP complex and induces the exchange of GDP to GTP. It remains bound to the aminoacyl-tRNA.EF-Tu.GTP complex up to the GTP hydrolysis stage on the ribosome. The protein is Elongation factor Ts of Bartonella henselae (strain ATCC 49882 / DSM 28221 / CCUG 30454 / Houston 1) (Rochalimaea henselae).